We begin with the raw amino-acid sequence, 281 residues long: Biotin synthase (281 aa).

A Radical SAM core domain is found at 1–230 (MNQKIFLCSI…AQRIMVAGGR (230 aa)). Cys-18, Cys-22, and Cys-25 together coordinate [4Fe-4S] cluster. Positions 62, 97, and 223 each coordinate [2Fe-2S] cluster.

It belongs to the radical SAM superfamily. Biotin synthase family. In terms of assembly, homodimer. [4Fe-4S] cluster is required as a cofactor. Requires [2Fe-2S] cluster as cofactor.

The enzyme catalyses (4R,5S)-dethiobiotin + (sulfur carrier)-SH + 2 reduced [2Fe-2S]-[ferredoxin] + 2 S-adenosyl-L-methionine = (sulfur carrier)-H + biotin + 2 5'-deoxyadenosine + 2 L-methionine + 2 oxidized [2Fe-2S]-[ferredoxin]. Its pathway is cofactor biosynthesis; biotin biosynthesis; biotin from 7,8-diaminononanoate: step 2/2. Functionally, catalyzes the conversion of dethiobiotin (DTB) to biotin by the insertion of a sulfur atom into dethiobiotin via a radical-based mechanism. The protein is Biotin synthase of Sulfurimonas denitrificans (strain ATCC 33889 / DSM 1251) (Thiomicrospira denitrificans (strain ATCC 33889 / DSM 1251)).